The chain runs to 648 residues: UDP-galactose:fucoside alpha-3-galactosyltransferase (648 aa).

7 WD repeats span residues 320–358, 372–420, 422–461, 464–505, 507–546, 556–595, and 617–648; these read NHTD…GNDT, HKRG…IQTF, GHTG…FKRV, GHNG…NIIK, NQGG…NFND, NENS…NNNN, and HLNS…SWDL.

It belongs to the glycosyltransferase 77 family. The cofactor is Mn(2+).

The protein resides in the cytoplasm. The catalysed reaction is an alpha-L-fucosyl-(1-&gt;2)-beta-D-galactosyl derivative + UDP-alpha-D-galactose = an alpha-D-galactosyl-(1-&gt;3)-[alpha-L-fucosyl-(1-&gt;2)]-beta-D-galactosyl derivative + UDP + H(+). The protein operates within protein modification; protein glycosylation. With respect to regulation, stimulated by dithiothreitol (DTT) in vitro. Totally inhibited by EDTA. Its function is as follows. Specifically catalyzes the transfer of a galactosyl residue to the hydroxyproline-linked saccharide on Skp1 protein (fpaA/fpaB). Catalyzes the formation of a Gal-alpha-1,3-Fuc linkage, leading to Gal-Fuc-Gal-GlcNAc-HyPro143-Skp1. This chain is UDP-galactose:fucoside alpha-3-galactosyltransferase (agtA), found in Dictyostelium discoideum (Social amoeba).